Consider the following 371-residue polypeptide: MTDATPTLTPKPWISGIAPYVPGKSAGADGRPLIKLSANENPLGTGEKARAAFAAVQSAPDALSRYPDPGSVELRAAIAAKYGLDPDRVICGNGSDELLHLAAGTYAGPGDEILYVRYGFAVYEIAARRVGAVPVEADDRDFATDVDALLAAVTDRTRVVYLANPNNPTGTLATREEVGRLYAGLPQNVLFVIDQAYAEYLTPDEDDGGLELAKTRPNVFVTRTFSKIHGLAAERIGWGYASADVIAALHRIRLPFNVTRAGQAAAVAALGDDDFVNRSRAHNARWRAWLAAELESLGNHGVRVVPSATNFLLVLFEGAVSAETVYHRLMDAGYIVRWLPGQGIPQALRMTIGTEDETRGLATAIRAALAG.

Lysine 227 bears the N6-(pyridoxal phosphate)lysine mark.

Belongs to the class-II pyridoxal-phosphate-dependent aminotransferase family. Histidinol-phosphate aminotransferase subfamily. In terms of assembly, homodimer. Pyridoxal 5'-phosphate serves as cofactor.

It catalyses the reaction L-histidinol phosphate + 2-oxoglutarate = 3-(imidazol-4-yl)-2-oxopropyl phosphate + L-glutamate. The protein operates within amino-acid biosynthesis; L-histidine biosynthesis; L-histidine from 5-phospho-alpha-D-ribose 1-diphosphate: step 7/9. The polypeptide is Histidinol-phosphate aminotransferase (Sphingopyxis alaskensis (strain DSM 13593 / LMG 18877 / RB2256) (Sphingomonas alaskensis)).